We begin with the raw amino-acid sequence, 37 residues long: Large ribosomal subunit protein bL36 (37 aa).

The protein belongs to the bacterial ribosomal protein bL36 family.

The polypeptide is Large ribosomal subunit protein bL36 (Cutibacterium acnes (strain DSM 16379 / KPA171202) (Propionibacterium acnes)).